The following is a 341-amino-acid chain: L-threonine 3-dehydrogenase (341 aa).

Cys38 provides a ligand contact to Zn(2+). Residues Thr40 and His43 each act as charge relay system in the active site. Zn(2+) is bound by residues His63, Glu64, Cys93, Cys96, Cys99, and Cys107. Residues Ile175, Asp195, Arg200, 262–264 (LGI), and 286–287 (IY) each bind NAD(+).

This sequence belongs to the zinc-containing alcohol dehydrogenase family. Homotetramer. Requires Zn(2+) as cofactor.

The protein resides in the cytoplasm. The catalysed reaction is L-threonine + NAD(+) = (2S)-2-amino-3-oxobutanoate + NADH + H(+). It participates in amino-acid degradation; L-threonine degradation via oxydo-reductase pathway; glycine from L-threonine: step 1/2. Its function is as follows. Catalyzes the NAD(+)-dependent oxidation of L-threonine to 2-amino-3-ketobutyrate. This chain is L-threonine 3-dehydrogenase, found in Shewanella halifaxensis (strain HAW-EB4).